We begin with the raw amino-acid sequence, 328 residues long: Reticulocalbin-3 (328 aa).

A signal peptide spans 1 to 20; it reads MMWRWTLMLLLLLLRHWALG. The disordered stretch occupies residues 24–48; the sequence is PDAGPHGQDRVHHGTPLSEAPHDDA. 6 consecutive EF-hand domains span residues 75–112, 113–148, 163–198, 200–235, 241–276, and 277–312; these read ESQARLGRIVDRMDLAGDSDGWVSLAELRAWIAHTQQR, HIRDSVSAAWHTYDTDRDGRVGWEELRNATYGHYEP, KMLARDERRFRVADQDGDSMATREELTAFLHPEEFP, MRDIVVAETLEDLDKNKDGYVQVEEYIADLYSAEPG, WVQTERQQFRDFRDLNKDGRLDGSEVGYWVLPPSQD, and QPLVEANHLLHESDTDKDGRLSKAEILSNWNMFVGS. Ca(2+) contacts are provided by Asp92, Asp94, Trp96, Glu101, Asp126, Asp128, Asp130, Arg132, and Glu137. The N-linked (GlcNAc...) asparagine glycan is linked to Asn140. 20 residues coordinate Ca(2+): Asp176, Asp178, Asp180, Met182, Glu187, Asp213, Asn215, Asp217, Tyr219, Glu224, Asp254, Asn256, Asp258, Arg260, Glu265, Asp290, Asp292, Asp294, Arg296, and Glu301. Positions 325-328 match the Prevents secretion from ER motif; that stretch reads HDEL.

This sequence belongs to the CREC family. As to quaternary structure, interacts with PCSK6 (immature form including the propeptide); probably involved in the maturation and the secretion of PCSK6. Post-translationally, N-glycosylated. In terms of processing, degraded by PCSK6 and other endoproteases including FURIN and PCSK5.

The protein resides in the endoplasmic reticulum lumen. Its function is as follows. Probable molecular chaperone assisting protein biosynthesis and transport in the endoplasmic reticulum. Required for the proper biosynthesis and transport of pulmonary surfactant-associated protein A/SP-A, pulmonary surfactant-associated protein D/SP-D and the lipid transporter ABCA3. By regulating both the proper expression and the degradation through the endoplasmic reticulum-associated protein degradation pathway of these proteins plays a crucial role in pulmonary surfactant homeostasis. Has an anti-fibrotic activity by negatively regulating the secretion of type I and type III collagens. This calcium-binding protein also transiently associates with immature PCSK6 and regulates its secretion. The polypeptide is Reticulocalbin-3 (Rattus norvegicus (Rat)).